Consider the following 191-residue polypeptide: UPF0149 protein VCM66_2399 (191 aa).

This sequence belongs to the UPF0149 family.

This Vibrio cholerae serotype O1 (strain M66-2) protein is UPF0149 protein VCM66_2399.